The chain runs to 493 residues: Proline--tRNA ligase (493 aa).

It belongs to the class-II aminoacyl-tRNA synthetase family. ProS type 3 subfamily. Homodimer.

The protein localises to the cytoplasm. The enzyme catalyses tRNA(Pro) + L-proline + ATP = L-prolyl-tRNA(Pro) + AMP + diphosphate. Catalyzes the attachment of proline to tRNA(Pro) in a two-step reaction: proline is first activated by ATP to form Pro-AMP and then transferred to the acceptor end of tRNA(Pro). The protein is Proline--tRNA ligase of Parabacteroides distasonis (strain ATCC 8503 / DSM 20701 / CIP 104284 / JCM 5825 / NCTC 11152).